The following is a 221-amino-acid chain: Epididymal secretory glutathione peroxidase (221 aa).

The N-terminal stretch at M1–T21 is a signal peptide. The active site involves C73.

It belongs to the glutathione peroxidase family. In terms of tissue distribution, epididymis.

The protein localises to the secreted. The catalysed reaction is 2 glutathione + H2O2 = glutathione disulfide + 2 H2O. Its function is as follows. Protects cells and enzymes from oxidative damage, by catalyzing the reduction of hydrogen peroxide, lipid peroxides and organic hydroperoxide, by glutathione. May constitute a glutathione peroxidase-like protective system against peroxide damage in sperm membrane lipids. This Macaca fascicularis (Crab-eating macaque) protein is Epididymal secretory glutathione peroxidase (GPX5).